The chain runs to 803 residues: Myb-like protein V (803 aa).

Disordered regions lie at residues 237 to 333 (SNIY…LPGL) and 429 to 803 (KSTS…SRRK). The stretch at 258–323 (DANDKNENNN…ENNKNKRTKS (66 aa)) forms a coiled coil. Positions 271–294 (DDADDAAADDADDADDDDMDDESD) are enriched in acidic residues. A compositionally biased stretch (low complexity) spans 295-315 (SNNNNKNSNNKNSNNKNSNEN). In terms of domain architecture, Myb-like spans 332–379 (GLWTDEECRSLIKAVMIIGHRWIKIKEDYYSTSKRKPSQLKDKMRSLR). 2 coiled-coil regions span residues 400–429 (EIEKLAVLFQQKEEAQKLAKEKIDSLSNIK) and 463–496 (NNEDNQNESESENEDENDNNEKEKEKRNKKNSAV). Residues 429–438 (KSTSNTSAAS) are compositionally biased toward polar residues. 2 stretches are compositionally biased toward acidic residues: residues 448–480 (NDSDEEVDQDSDNDSNNEDNQNESESENEDEND) and 510–533 (EEEESDEEHNDSEEDSQEDSEENE). Composition is skewed to basic residues over residues 537 to 553 (KQKRKSNQIKSSPKKLK) and 568 to 577 (HKSKLKSKPQ). Positions 573-616 (KSKPQRKVEKEESEKEESEEEESEEEEEEDDEDYESEEDKKKKK) form a coiled coil. The span at 586-609 (EKEESEEEESEEEEEEDDEDYESE) shows a compositional bias: acidic residues. 2 stretches are compositionally biased toward low complexity: residues 625–636 (TSTHTTTTTTTT) and 666–733 (KKSN…PTKK). A compositionally biased stretch (basic and acidic residues) spans 786-795 (LNKDSKENKK).

The polypeptide is Myb-like protein V (mybV) (Dictyostelium discoideum (Social amoeba)).